A 574-amino-acid chain; its full sequence is Envelope glycoprotein (574 aa).

Residues 1-22 (MTLKDIPFWRVLLIFQTARVYA) form the signal peptide. The Extracellular portion of the chain corresponds to 23-514 (GFGDPREAIT…TGLHGLLPYL (492 aa)). N-linked (GlcNAc...) asparagine; by host glycans are attached at residues Asn-117 and Asn-233. Positions 243–246 (CWLC) match the CXXC motif. 3 disulfide bridges follow: Cys-243–Cys-246, Cys-243–Cys-471, and Cys-463–Cys-470. 8 N-linked (GlcNAc...) asparagine; by host glycosylation sites follow: Asn-260, Asn-267, Asn-288, Asn-298, Asn-312, Asn-318, Asn-327, and Asn-345. The interval 386–406 (FIPLLVGLGITTAVSTGTAGL) is fusion peptide. Coiled coils occupy residues 407–457 (GYSI…LLTA) and 467–503 (QEKC…DNPF). Residues 446-462 (LQNRRGLDLLTAEQGGI) are immunosuppression. The short motif at 463–471 (CLALQEKCC) is the CX6CC element. Asn-475 carries N-linked (GlcNAc...) asparagine; by host glycosylation. Residues 515–535 (LPLLGPLFCLLLLITFGPLIF) form a helical membrane-spanning segment. At 536-574 (NKIITFVKQQIDAIQAKPIQVHYHRLEQEDNGGVYLRVS) the chain is on the cytoplasmic side. The YXXL motif; contains endocytosis signal signature appears at 558 to 561 (YHRL).

In terms of assembly, the mature envelope protein (Env) consists of a trimer of SU-TM heterodimers attached by a labile interchain disulfide bond. Specific enzymatic cleavages in vivo yield mature proteins. Envelope glycoproteins are synthesized as an inactive precursor that is N-glycosylated and processed likely by host cell furin or by a furin-like protease in the Golgi to yield the mature SU and TM proteins. The cleavage site between SU and TM requires the minimal sequence [KR]-X-[KR]-R. The R-peptide is released from the C-terminus of the cytoplasmic tail of the TM protein upon particle formation as a result of proteolytic cleavage by the viral protease. Cleavage of this peptide is required for TM to become fusogenic. Post-translationally, the CXXC motif is highly conserved across a broad range of retroviral envelope proteins. It is thought to participate in the formation of a labile disulfide bond possibly with the CX6CC motif present in the transmembrane protein. Isomerization of the intersubunit disulfide bond to an SU intrachain disulfide bond is thought to occur upon receptor recognition in order to allow membrane fusion.

Its subcellular location is the virion membrane. It is found in the host cell membrane. Functionally, the surface protein (SU) attaches the virus to the host cell by binding to its receptor. This interaction triggers the refolding of the transmembrane protein (TM) and is thought to activate its fusogenic potential by unmasking its fusion peptide. Fusion occurs at the host cell plasma membrane. In terms of biological role, the transmembrane protein (TM) acts as a class I viral fusion protein. Under the current model, the protein has at least 3 conformational states: pre-fusion native state, pre-hairpin intermediate state, and post-fusion hairpin state. During viral and target cell membrane fusion, the coiled coil regions (heptad repeats) assume a trimer-of-hairpins structure, positioning the fusion peptide in close proximity to the C-terminal region of the ectodomain. The formation of this structure appears to drive apposition and subsequent fusion of viral and target cell membranes. Membranes fusion leads to delivery of the nucleocapsid into the cytoplasm. This is Envelope glycoprotein (env) from Macaca mulatta (Rhesus macaque).